An 88-amino-acid polypeptide reads, in one-letter code: Large ribosomal subunit protein bL27 (88 aa).

It belongs to the bacterial ribosomal protein bL27 family.

In Parabacteroides distasonis (strain ATCC 8503 / DSM 20701 / CIP 104284 / JCM 5825 / NCTC 11152), this protein is Large ribosomal subunit protein bL27.